A 147-amino-acid polypeptide reads, in one-letter code: DNA-directed RNA polymerase RPB6 homolog (147 aa).

This sequence belongs to the archaeal RpoK/eukaryotic RPB6 RNA polymerase subunit family. Part of the viral DNA-directed RNA polymerase that consists of 8 polII-like subunits (RPB1, RPB2, RPB3, RPB5, RPB6, RPB7, RPB9, RPB10), a capping enzyme and a termination factor.

The protein localises to the host cytoplasm. It localises to the virion. Its function is as follows. Component of the DNA-directed RNA polymerase (RNAP) that catalyzes the transcription in the cytoplasm of viral DNA into RNA using the four ribonucleoside triphosphates as substrates. This is DNA-directed RNA polymerase RPB6 homolog from Ornithodoros (relapsing fever ticks).